Reading from the N-terminus, the 375-residue chain is Ribonuclease D (375 aa).

Residues 3–169 enclose the 3'-5' exonuclease domain; it reads YQMITTDDAL…LPITAKLMVE (167 aa). Residues 210-289 enclose the HRDC domain; the sequence is RTRQLACLQL…EKAQTLPEDA (80 aa).

It belongs to the RNase D family. A divalent metal cation is required as a cofactor.

Its subcellular location is the cytoplasm. The catalysed reaction is Exonucleolytic cleavage that removes extra residues from the 3'-terminus of tRNA to produce 5'-mononucleotides.. Functionally, exonuclease involved in the 3' processing of various precursor tRNAs. Initiates hydrolysis at the 3'-terminus of an RNA molecule and releases 5'-mononucleotides. The chain is Ribonuclease D from Escherichia coli (strain K12).